The sequence spans 472 residues: Glutamate--tRNA ligase (472 aa).

The 'HIGH' region motif lies at 9-19 (PSPTGYLHVGG). Residues Cys98, Cys100, Cys125, and His127 each contribute to the Zn(2+) site. The short motif at 237–241 (KLSKR) is the 'KMSKS' region element. Lys240 lines the ATP pocket.

This sequence belongs to the class-I aminoacyl-tRNA synthetase family. Glutamate--tRNA ligase type 1 subfamily. As to quaternary structure, monomer. Zn(2+) is required as a cofactor.

It is found in the cytoplasm. It carries out the reaction tRNA(Glu) + L-glutamate + ATP = L-glutamyl-tRNA(Glu) + AMP + diphosphate. Its function is as follows. Catalyzes the attachment of glutamate to tRNA(Glu) in a two-step reaction: glutamate is first activated by ATP to form Glu-AMP and then transferred to the acceptor end of tRNA(Glu). The polypeptide is Glutamate--tRNA ligase (Klebsiella pneumoniae (strain 342)).